Reading from the N-terminus, the 399-residue chain is Calsequestrin-2 (399 aa).

An N-terminal signal peptide occupies residues 1 to 19 (MKRTHLFIVGIYFLSSCRA). Position 282 is a phosphotyrosine (Y282). An N-linked (GlcNAc...) asparagine glycan is attached at N335. The tract at residues 365–399 (VLSGKINTEDDDEDDDDDDNSDEEDNDDSDDDDDE) is disordered. Residues 373 to 399 (EDDDEDDDDDDNSDEEDNDDSDDDDDE) are compositionally biased toward acidic residues. 2 positions are modified to phosphoserine: S385 and S393.

The protein belongs to the calsequestrin family. In terms of assembly, monomer, homodimer and homooligomer. Mostly monomeric in the absence of calcium. Forms higher oligomers in a calcium-dependent manner. Dimers associate to form tetramers, that then form linear homomer chains. Interacts with ASPH and TRDN. Post-translationally, phosphorylation in the C-terminus, probably by CK2, moderately increases calcium buffering capacity. N-glycosylated.

It is found in the sarcoplasmic reticulum lumen. Calsequestrin is a high-capacity, moderate affinity, calcium-binding protein and thus acts as an internal calcium store in muscle. Calcium ions are bound by clusters of acidic residues at the protein surface, especially at the interface between subunits. Can bind around 60 Ca(2+) ions. Regulates the release of lumenal Ca(2+) via the calcium release channel RYR2; this plays an important role in triggering muscle contraction. Plays a role in excitation-contraction coupling in the heart and in regulating the rate of heart beats. The sequence is that of Calsequestrin-2 (CASQ2) from Homo sapiens (Human).